Here is a 325-residue protein sequence, read N- to C-terminus: Basic membrane protein A (325 aa).

A signal peptide spans 1-3 (FLS). Residue Cys4 is the site of N-palmitoyl cysteine attachment. Cys4 carries S-diacylglycerol cysteine lipidation.

It belongs to the BMP lipoprotein family. In terms of assembly, monomer.

The protein resides in the cell inner membrane. Functionally, immunogenic protein. May be part of an ABC-type nucleoside uptake system involved in the purine salvage pathway. In Borreliella afzelii (Borrelia afzelii), this protein is Basic membrane protein A (bmpA).